A 657-amino-acid polypeptide reads, in one-letter code: Pentatricopeptide repeat-containing protein At2g37310 (657 aa).

PPR repeat units lie at residues 21 to 55 (DGGAYGHLIQHFTRHRLPLHVLQLHARIVVFSIKP), 56 to 86 (DNFLASKLISFYTRQDRFRQALHVFDEITVR), 87 to 121 (NAFSYNALLIAYTSREMYFDAFSLFLSWIGSSCYS), 128 to 165 (DSISISCVLKALSGCDDFWLGSLARQVHGFVIRGGFDS), 166 to 196 (DVFVGNGMITYYTKCDNIESARKVFDEMSER), 197 to 232 (DVVSWNSMISGYSQSGSFEDCKKMYKAMLACSDFKP), 233 to 267 (NGVTVISVFQACGQSSDLIFGLEVHKKMIENHIQM), 268 to 298 (DLSLCNAVIGFYAKCGSLDYARALFDEMSEK), 299 to 333 (DSVTYGAIISGYMAHGLVKEAMALFSEMESIGLST), 334 to 364 (WNAMISGLMQNNHHEEVINSFREMIRCGSRP), 365 to 399 (NTVTLSSLLPSLTYSSNLKGGKEIHAFAIRNGADN), 400 to 430 (NIYVTTSIIDNYAKLGFLLGAQRVFDNCKDR), 431 to 465 (SLIAWTAIITAYAVHGDSDSACSLFDQMQCLGTKP), 466 to 501 (DDVTLTAVLSAFAHSGDSDMAQHIFDSMLTKYDIEP), and 502 to 536 (GVEHYACMVSVLSRAGKLSDAMEFISKMPIDPIAK). A type E motif region spans residues 537–612 (VWGALLNGAS…IPGTSWIETE (76 aa)). Positions 613-643 (KGLRSFIAKDSSCERSKEMYEIIEGLVESMS) are type E(+) motif.

Belongs to the PPR family. PCMP-E subfamily.

The protein is Pentatricopeptide repeat-containing protein At2g37310 (PCMP-E49) of Arabidopsis thaliana (Mouse-ear cress).